Reading from the N-terminus, the 152-residue chain is Bacchus (152 aa).

Residues 29-41 show a composition bias toward basic and acidic residues; the sequence is DLKAKAAAEDKAA. Positions 29 to 152 are disordered; sequence DLKAKAAAED…DDGSGSDDQA (124 aa). Low complexity predominate over residues 42–51; sequence AADAAGDAAD. Basic and acidic residues predominate over residues 72–89; that stretch reads ESVKGTKRPAEAKSAESK. Acidic residues predominate over residues 99–152; sequence GDSDEEEALEEIIEGDSEIESDEYDIPYDGEEDDIECDDDDDDNDDGSGSDDQA.

As to expression, expressed in the brain.

The protein resides in the nucleus. Negatively regulates tyramine beta-hydroxylase tbh and thus the conversion of tyramine (TA) to octopamine (OA). In tyrosine decarboxylase 2 (Tdc2) neurons, acts in an amine-mediated signaling pathway to negatively regulate acute ethanol sensitivity probably via tbh-mediated depletion of TA. The chain is Bacchus from Drosophila melanogaster (Fruit fly).